The following is a 118-amino-acid chain: MKKIKSFGGKSLGGGKQEKLLKDFMKMQEELQKKMQEMEESFSEMEVEASVGGGAVRIVATCDRRVKEIEIDEDLKEDLETLKDLLAAAVNEIMEKIEKRREEEMSKITQQFGIPGLM.

The protein belongs to the YbaB/EbfC family. Homodimer.

It is found in the cytoplasm. The protein localises to the nucleoid. Functionally, binds to DNA and alters its conformation. May be involved in regulation of gene expression, nucleoid organization and DNA protection. The protein is Nucleoid-associated protein CTN_1899 of Thermotoga neapolitana (strain ATCC 49049 / DSM 4359 / NBRC 107923 / NS-E).